Here is a 159-residue protein sequence, read N- to C-terminus: Ribosomal RNA large subunit methyltransferase H (159 aa).

Residues L76, G108, and 127–132 contribute to the S-adenosyl-L-methionine site; that span reads FGKLTM.

It belongs to the RNA methyltransferase RlmH family. As to quaternary structure, homodimer.

The protein resides in the cytoplasm. It catalyses the reaction pseudouridine(1915) in 23S rRNA + S-adenosyl-L-methionine = N(3)-methylpseudouridine(1915) in 23S rRNA + S-adenosyl-L-homocysteine + H(+). Its function is as follows. Specifically methylates the pseudouridine at position 1915 (m3Psi1915) in 23S rRNA. The chain is Ribosomal RNA large subunit methyltransferase H from Lactobacillus delbrueckii subsp. bulgaricus (strain ATCC 11842 / DSM 20081 / BCRC 10696 / JCM 1002 / NBRC 13953 / NCIMB 11778 / NCTC 12712 / WDCM 00102 / Lb 14).